Here is a 148-residue protein sequence, read N- to C-terminus: 3-hydroxyacyl-[acyl-carrier-protein] dehydratase FabZ (148 aa).

The active site involves histidine 55.

The protein belongs to the thioester dehydratase family. FabZ subfamily.

It is found in the cytoplasm. It catalyses the reaction a (3R)-hydroxyacyl-[ACP] = a (2E)-enoyl-[ACP] + H2O. Functionally, involved in unsaturated fatty acids biosynthesis. Catalyzes the dehydration of short chain beta-hydroxyacyl-ACPs and long chain saturated and unsaturated beta-hydroxyacyl-ACPs. This Haemophilus influenzae (strain 86-028NP) protein is 3-hydroxyacyl-[acyl-carrier-protein] dehydratase FabZ.